The sequence spans 176 residues: MAITGIFFGSDTGNTENIAKMIQKQLGKDVADVHDIAKSSKEDLEAYDILLLGIPTWYYGEAQCDWDDFFPTLEEIDFNGKLVALFGCGDQEDYAEYFCDALGTIRDIIEPRGATIVGHWPTAGYHFEASKGLADDDHFVGLAIDEDRQPELTAERVEKWVKQISEELHLDEILNA.

Residues 4 to 165 (TGIFFGSDTG…RVEKWVKQIS (162 aa)) form the Flavodoxin-like domain.

The protein belongs to the flavodoxin family. FMN is required as a cofactor.

In terms of biological role, low-potential electron donor to a number of redox enzymes (Potential). Involved in the reactivation of inactive cob(II)alamin in methionine synthase. In Escherichia coli O157:H7, this protein is Flavodoxin 1 (fldA).